Consider the following 247-residue polypeptide: Ribosomal RNA large subunit methyltransferase E (247 aa).

The disordered stretch occupies residues 1–21; that stretch reads MKKTTKKTAGGYGGSGSHKLY. Positions 88, 90, 111, 127, and 151 each coordinate S-adenosyl-L-methionine. Residue Lys-191 is the Proton acceptor of the active site.

The protein belongs to the class I-like SAM-binding methyltransferase superfamily. RNA methyltransferase RlmE family.

It localises to the cytoplasm. It carries out the reaction uridine(2552) in 23S rRNA + S-adenosyl-L-methionine = 2'-O-methyluridine(2552) in 23S rRNA + S-adenosyl-L-homocysteine + H(+). Specifically methylates the uridine in position 2552 of 23S rRNA at the 2'-O position of the ribose in the fully assembled 50S ribosomal subunit. The protein is Ribosomal RNA large subunit methyltransferase E of Bartonella henselae (strain ATCC 49882 / DSM 28221 / CCUG 30454 / Houston 1) (Rochalimaea henselae).